Here is a 448-residue protein sequence, read N- to C-terminus: Senescence/dehydration-associated protein At4g35985, chloroplastic (448 aa).

Residues 1-36 (MECSATPPKLYPTVDTSTTVAPLPKSSSSSSSTNNN) form a disordered region. Residues 1 to 56 (MECSATPPKLYPTVDTSTTVAPLPKSSSSSSSTNNNNLYPSINVNDLVNNIFPDPT) constitute a chloroplast transit peptide. The span at 26 to 36 (SSSSSSSTNNN) shows a compositional bias: low complexity. Residues 248-416 (IAAGSGQLIK…AWTVFKIRQA (169 aa)) form the Senescence domain. The disordered stretch occupies residues 422–448 (AMKPSSLAKTVVKTAAKERKKGKKSSK). Residues 439–448 (ERKKGKKSSK) are compositionally biased toward basic residues.

In terms of tissue distribution, expressed in leaves (especially in midribs and trichomes), apical meristemic regions, stems, roots and flowers.

The protein localises to the plastid. It localises to the chloroplast. The sequence is that of Senescence/dehydration-associated protein At4g35985, chloroplastic from Arabidopsis thaliana (Mouse-ear cress).